We begin with the raw amino-acid sequence, 337 residues long: RNA 3'-terminal phosphate cyclase (337 aa).

Residues Q100 and 281-285 (YMGDQ) each bind ATP. H306 acts as the Tele-AMP-histidine intermediate in catalysis.

The protein belongs to the RNA 3'-terminal cyclase family. Type 1 subfamily.

The protein resides in the cytoplasm. It catalyses the reaction a 3'-end 3'-phospho-ribonucleotide-RNA + ATP = a 3'-end 2',3'-cyclophospho-ribonucleotide-RNA + AMP + diphosphate. In terms of biological role, catalyzes the conversion of 3'-phosphate to a 2',3'-cyclic phosphodiester at the end of RNA. The mechanism of action of the enzyme occurs in 3 steps: (A) adenylation of the enzyme by ATP; (B) transfer of adenylate to an RNA-N3'P to produce RNA-N3'PP5'A; (C) and attack of the adjacent 2'-hydroxyl on the 3'-phosphorus in the diester linkage to produce the cyclic end product. The biological role of this enzyme is unknown but it is likely to function in some aspects of cellular RNA processing. The protein is RNA 3'-terminal phosphate cyclase (rtcA) of Methanothermobacter thermautotrophicus (strain ATCC 29096 / DSM 1053 / JCM 10044 / NBRC 100330 / Delta H) (Methanobacterium thermoautotrophicum).